We begin with the raw amino-acid sequence, 448 residues long: Asparagine--tRNA ligase (448 aa).

The protein belongs to the class-II aminoacyl-tRNA synthetase family. As to quaternary structure, homodimer.

Its subcellular location is the cytoplasm. It catalyses the reaction tRNA(Asn) + L-asparagine + ATP = L-asparaginyl-tRNA(Asn) + AMP + diphosphate + H(+). The sequence is that of Asparagine--tRNA ligase from Streptococcus pyogenes serotype M4 (strain MGAS10750).